The chain runs to 1173 residues: DNA-directed RNA polymerase subunit beta (1173 aa).

Belongs to the RNA polymerase beta chain family. In terms of assembly, the RNAP catalytic core consists of 2 alpha, 1 beta, 1 beta' and 1 omega subunit. When a sigma factor is associated with the core the holoenzyme is formed, which can initiate transcription.

The catalysed reaction is RNA(n) + a ribonucleoside 5'-triphosphate = RNA(n+1) + diphosphate. In terms of biological role, DNA-dependent RNA polymerase catalyzes the transcription of DNA into RNA using the four ribonucleoside triphosphates as substrates. This Kosmotoga olearia (strain ATCC BAA-1733 / DSM 21960 / TBF 19.5.1) protein is DNA-directed RNA polymerase subunit beta.